Consider the following 235-residue polypeptide: UPF0173 metal-dependent hydrolase mll0680 (235 aa).

Belongs to the UPF0173 family.

The chain is UPF0173 metal-dependent hydrolase mll0680 from Mesorhizobium japonicum (strain LMG 29417 / CECT 9101 / MAFF 303099) (Mesorhizobium loti (strain MAFF 303099)).